A 102-amino-acid chain; its full sequence is Small ribosomal subunit protein uS10 (102 aa).

It belongs to the universal ribosomal protein uS10 family. In terms of assembly, part of the 30S ribosomal subunit.

In terms of biological role, involved in the binding of tRNA to the ribosomes. The chain is Small ribosomal subunit protein uS10 from Xanthobacter autotrophicus (strain ATCC BAA-1158 / Py2).